The primary structure comprises 490 residues: Probable cytosol aminopeptidase (490 aa).

Lys257 and Asp262 together coordinate Mn(2+). Lys269 is an active-site residue. Residues Asp281, Asp341, and Glu343 each coordinate Mn(2+). Arg345 is an active-site residue.

Belongs to the peptidase M17 family. It depends on Mn(2+) as a cofactor.

The protein localises to the cytoplasm. It catalyses the reaction Release of an N-terminal amino acid, Xaa-|-Yaa-, in which Xaa is preferably Leu, but may be other amino acids including Pro although not Arg or Lys, and Yaa may be Pro. Amino acid amides and methyl esters are also readily hydrolyzed, but rates on arylamides are exceedingly low.. The enzyme catalyses Release of an N-terminal amino acid, preferentially leucine, but not glutamic or aspartic acids.. Its function is as follows. Presumably involved in the processing and regular turnover of intracellular proteins. Catalyzes the removal of unsubstituted N-terminal amino acids from various peptides. The sequence is that of Probable cytosol aminopeptidase from Prochlorococcus marinus (strain AS9601).